A 263-amino-acid chain; its full sequence is Glycerol uptake facilitator protein (263 aa).

The Cytoplasmic segment spans residues 1-7; that stretch reads MNIYRKK. The helical transmembrane segment at 8 to 36 threads the bilayer; that stretch reads NIIKKCFMEFFGTGLVMFFGIGCLAASKL. Over 37 to 41 the chain is Extracellular; the sequence is TNANF. The chain crosses the membrane as a helical span at residues 42 to 62; that stretch reads TQFEISCIWGFGVSIAIYFSS. Residues 63-65 lie on the Cytoplasmic side of the membrane; it reads SIS. An intramembrane segment occupies 66–69; that stretch reads GAHL. The NPA 1 signature appears at 70–72; that stretch reads NPA. Residues 70 to 80 constitute an intramembrane region (helical); the sequence is NPAVTIFFWLS. Topologically, residues 81-86 are cytoplasmic; sequence SKLNKR. A helical transmembrane segment spans residues 87–110; that stretch reads KVLPYIISQTLGSFFFTMLTYYLY. The Extracellular portion of the chain corresponds to 111–145; the sequence is NNLLISFERNNNVVRGTQESLNLASIFCVYPNYNN. Residues 146–171 traverse the membrane as a helical segment; the sequence is SFIYDFIIEIFSTALFILIVLEFNNR. Topologically, residues 172-181 are cytoplasmic; the sequence is NSNYFLYNRS. The helical transmembrane segment at 182–198 threads the bilayer; sequence VAPILTGFLVCMINLVI. Topologically, residues 199–202 are extracellular; the sequence is NPLN. Residues 203–206 lie within the membrane without spanning it; that stretch reads NISL. An NPA 2 motif is present at residues 207 to 209; the sequence is NPA. The segment at residues 207–220 is an intramembrane region (helical); that stretch reads NPARDLGPKILLSL. Over 221-236 the chain is Extracellular; the sequence is TGWGLFSFTGGNDNIL. The helical transmembrane segment at 237–259 threads the bilayer; it reads YCFIPIMGPILGANLGGWIHKTL. The Cytoplasmic segment spans residues 260–263; the sequence is INNS.

Belongs to the MIP/aquaporin (TC 1.A.8) family.

It localises to the cell membrane. The catalysed reaction is glycerol(in) = glycerol(out). Its function is as follows. Mediates glycerol diffusion across the cytoplasmic membrane via a pore-type mechanism. The chain is Glycerol uptake facilitator protein (glpF) from Buchnera aphidicola subsp. Acyrthosiphon pisum (strain APS) (Acyrthosiphon pisum symbiotic bacterium).